The sequence spans 228 residues: MIRHTRLLLASLCLIATGARASAEPVQDGQLWINTTLFGSVGDVAYFAEVQPRIGNGISQLDQIILRPAVGWKVNDALVLYQGYAYVEDHGMRDNVRIEDRSFQEINWKIGEFSGVKVSSRTRFEQRWQSAGRDVGFRLRENLRFAMPLPKDWGGVSAVGWTELFVALNDTDWGTRAGFDRVRAFIGLELPIGGKSTVEIGYLNQTARTQASGIELDHILSLNLFVRY.

An N-terminal signal peptide occupies residues 1–23 (MIRHTRLLLASLCLIATGARASA).

This is an uncharacterized protein from Methylorubrum extorquens (strain ATCC 14718 / DSM 1338 / JCM 2805 / NCIMB 9133 / AM1) (Methylobacterium extorquens).